Consider the following 551-residue polypeptide: ATP synthase subunit alpha, mitochondrial (551 aa).

210–217 (GDRQTGKT) lines the ATP pocket.

This sequence belongs to the ATPase alpha/beta chains family. In terms of assembly, F-type ATPases have 2 components, CF(1) - the catalytic core - and CF(0) - the membrane proton channel. CF(1) has five subunits: alpha(3), beta(3), gamma(1), delta(1), epsilon(1). CF(0) has three main subunits: a, b and c.

The protein localises to the mitochondrion. The protein resides in the mitochondrion inner membrane. Functionally, mitochondrial membrane ATP synthase (F(1)F(0) ATP synthase or Complex V) produces ATP from ADP in the presence of a proton gradient across the membrane which is generated by electron transport complexes of the respiratory chain. F-type ATPases consist of two structural domains, F(1) - containing the extramembraneous catalytic core, and F(0) - containing the membrane proton channel, linked together by a central stalk and a peripheral stalk. During catalysis, ATP synthesis in the catalytic domain of F(1) is coupled via a rotary mechanism of the central stalk subunits to proton translocation. Subunits alpha and beta form the catalytic core in F(1). Rotation of the central stalk against the surrounding alpha(3)beta(3) subunits leads to hydrolysis of ATP in three separate catalytic sites on the beta subunits. Subunit alpha does not bear the catalytic high-affinity ATP-binding sites. The chain is ATP synthase subunit alpha, mitochondrial (atp-1) from Neurospora crassa (strain ATCC 24698 / 74-OR23-1A / CBS 708.71 / DSM 1257 / FGSC 987).